Consider the following 698-residue polypeptide: MENSVKMDTSGNSTPLPQRQARANNQPNKNIGKHGPQKQNEGASDGGPAEKRQRFGPNNQNGGGGSVGGGGGGGGGSGGGGGGGGQNQNKNFANKGGFGGGGNRNRNRGGNQNRSNFQNQNQNQKSTTDAPKADGGNLNDKSNEANNANQSNSNSAAQAQAQLQAQAQAHAQAQAQAHAQAQAQAQAQAHAHAQNQAFRARGGGGGGGGGGGGGGGGGGGGRDRNRGSRGGGGGGQNSGGGNNSQRGDDFFIAQRLRSISGPTHELPPIEVAQETKFSGRNRLYVGNLTNDITDEELREMFKPYGEIGEIFSNLEKNFTFLKVDYHINAEKAKRALDGSMRKGRQLRVRFAPNATILRVSNLTPFVSNELLYKSFEIFGPIERASITVDDRGKHLGEGTVEFAKKSSASACLRLCNEKCFFLTASLRPCLVEPMEVNDDNDGLPEKALNKKLQEFNQERSVGPRFADLNSFEHEYGSRWKQLHDLFKSKQDALKRELKMEEEKLDAQMEYARYGQETELSRQELRKRESDNERKKLEWEMREKQAEEMRKREEETMRRHQTEMQSRMVRQEEDMRRRQQENTLFMQAQQLNSLLDQQEGFGGGNNGGGGGGGGGGGGVGGGVGNSNFDNFGGNSNSPFEVFRGNNNSSMAGNNAGPGANNQQQDSFAAFEFGVNNMNQGGNQRGNNGGNNVPWGRRRF.

A compositionally biased stretch (polar residues) spans 1-29 (MENSVKMDTSGNSTPLPQRQARANNQPNK). A disordered region spans residues 1 to 247 (MENSVKMDTS…SGGGNNSQRG (247 aa)). Residues 61–86 (NGGGGSVGGGGGGGGGSGGGGGGGGQ) are compositionally biased toward gly residues. 2 stretches are compositionally biased toward low complexity: residues 108–126 (RGGN…NQKS) and 145–197 (ANNA…QNQA). 2 stretches are compositionally biased toward gly residues: residues 201–220 (RGGG…GGGG) and 228–242 (SRGG…GGGN). RRM domains are found at residues 281 to 353 (NRLY…FAPN) and 355 to 441 (TILR…DDND). The stretch at 484 to 582 (DLFKSKQDAL…DMRRRQQENT (99 aa)) forms a coiled coil. Disordered stretches follow at residues 515 to 571 (QETE…VRQE) and 597 to 698 (QEGF…RRRF). The segment covering 518-561 (ELSRQELRKRESDNERKKLEWEMREKQAEEMRKREEETMRRHQT) has biased composition (basic and acidic residues). Residues 599-623 (GFGGGNNGGGGGGGGGGGGVGGGVG) show a composition bias toward gly residues. 2 stretches are compositionally biased toward low complexity: residues 624-636 (NSNF…NSNS) and 643-660 (GNNN…GANN).

Functionally, required for normal vision and courtship behavior in Drosophila. The chain is Protein no-on-transient A (nonA) from Drosophila littoralis (Fruit fly).